The sequence spans 361 residues: Phosphoserine aminotransferase (361 aa).

L-glutamate is bound at residue Arg42. Pyridoxal 5'-phosphate-binding positions include 76 to 77, Trp102, Thr152, Asp172, and Gln195; that span reads AT. At Lys196 the chain carries N6-(pyridoxal phosphate)lysine. 237 to 238 contributes to the pyridoxal 5'-phosphate binding site; the sequence is NT.

This sequence belongs to the class-V pyridoxal-phosphate-dependent aminotransferase family. SerC subfamily. As to quaternary structure, homodimer. Pyridoxal 5'-phosphate is required as a cofactor.

Its subcellular location is the cytoplasm. It catalyses the reaction O-phospho-L-serine + 2-oxoglutarate = 3-phosphooxypyruvate + L-glutamate. The enzyme catalyses 4-(phosphooxy)-L-threonine + 2-oxoglutarate = (R)-3-hydroxy-2-oxo-4-phosphooxybutanoate + L-glutamate. It functions in the pathway amino-acid biosynthesis; L-serine biosynthesis; L-serine from 3-phospho-D-glycerate: step 2/3. It participates in cofactor biosynthesis; pyridoxine 5'-phosphate biosynthesis; pyridoxine 5'-phosphate from D-erythrose 4-phosphate: step 3/5. Its function is as follows. Catalyzes the reversible conversion of 3-phosphohydroxypyruvate to phosphoserine and of 3-hydroxy-2-oxo-4-phosphonooxybutanoate to phosphohydroxythreonine. The sequence is that of Phosphoserine aminotransferase from Xanthomonas campestris pv. campestris (strain B100).